Here is a 698-residue protein sequence, read N- to C-terminus: Endogenous retrovirus group K member 9 Env polyprotein (698 aa).

Positions 1–47 (MNPSEMQRKAPPRRRRHRNRAPLTHKMNKMVTSEEQMKLPSTKKAEP) are disordered. The signal sequence occupies residues 1-89 (MNPSEMQRKA…ALMIVSMVVS (89 aa)). Basic residues predominate over residues 10 to 20 (APPRRRRHRNR). The Extracellular segment spans residues 90–631 (LPMPAGAAAA…NLNPVTWVKT (542 aa)). N-linked (GlcNAc...) asparagine glycans are attached at residues asparagine 100, asparagine 128, asparagine 153, asparagine 273, asparagine 354, asparagine 371, and asparagine 460. The segment at 465–485 (FIFTLIAVIMGLIAVTATAAV) is fusion peptide. N-linked (GlcNAc...) asparagine glycans are attached at residues asparagine 506, asparagine 553, asparagine 565, and asparagine 584. The helical transmembrane segment at 632 to 652 (IGSTTIINLILILVCLFCLLL) threads the bilayer. Residues 653–698 (VCRCTQQLRRDSDHRERAMMTMAVLSKRKGGNVGKSKRDQIVTVSV) are Cytoplasmic-facing.

This sequence belongs to the beta type-B retroviral envelope protein family. HERV class-II K(HML-2) env subfamily. In terms of assembly, the surface (SU) and transmembrane (TM) proteins form a heterodimer. SU and TM are attached by noncovalent interactions or by a labile interchain disulfide bond. In terms of processing, specific enzymatic cleavages in vivo yield the mature SU and TM proteins.

The protein resides in the cell membrane. It localises to the virion. Its function is as follows. Retroviral envelope proteins mediate receptor recognition and membrane fusion during early infection. Endogenous envelope proteins may have kept, lost or modified their original function during evolution. This endogenous envelope protein has lost its original fusogenic properties. In terms of biological role, SU mediates receptor recognition. TM anchors the envelope heterodimer to the viral membrane through one transmembrane domain. The other hydrophobic domain, called fusion peptide, mediates fusion of the viral membrane with the target cell membrane. This is Endogenous retrovirus group K member 9 Env polyprotein (ERVK-9) from Homo sapiens (Human).